The following is a 289-amino-acid chain: Protease HtpX homolog (289 aa).

2 helical membrane-spanning segments follow: residues 8–28 and 29–49; these read LALL…VIGG and SSGL…SWYQ. His132 contacts Zn(2+). The active site involves Glu133. His136 provides a ligand contact to Zn(2+). Transmembrane regions (helical) follow at residues 151-171 and 183-203; these read VAGA…FGGI and LGVL…QLAI. Glu208 provides a ligand contact to Zn(2+).

It belongs to the peptidase M48B family. It depends on Zn(2+) as a cofactor.

Its subcellular location is the cell inner membrane. This is Protease HtpX homolog from Trichormus variabilis (strain ATCC 29413 / PCC 7937) (Anabaena variabilis).